The sequence spans 591 residues: Aspartate--tRNA ligase (591 aa).

Position 171 (glutamate 171) interacts with L-aspartate. The tract at residues 195 to 198 (QLFK) is aspartate. Arginine 217 is an L-aspartate binding site. Residues 217–219 (RDE) and glutamine 226 each bind ATP. Histidine 448 provides a ligand contact to L-aspartate. ATP is bound at residue glutamate 482. Residue arginine 489 participates in L-aspartate binding. Residue 534-537 (GLDR) participates in ATP binding.

It belongs to the class-II aminoacyl-tRNA synthetase family. Type 1 subfamily. In terms of assembly, homodimer.

It is found in the cytoplasm. It carries out the reaction tRNA(Asp) + L-aspartate + ATP = L-aspartyl-tRNA(Asp) + AMP + diphosphate. In terms of biological role, catalyzes the attachment of L-aspartate to tRNA(Asp) in a two-step reaction: L-aspartate is first activated by ATP to form Asp-AMP and then transferred to the acceptor end of tRNA(Asp). This is Aspartate--tRNA ligase from Aliivibrio fischeri (strain MJ11) (Vibrio fischeri).